The sequence spans 371 residues: Cytochrome b (371 aa).

4 helical membrane passes run F25 to V45, W69 to I90, W105 to L125, and F170 to I190. H75 and H89 together coordinate heme b. Heme b is bound by residues H174 and H188. H193 serves as a coordination point for a ubiquinone. Transmembrane regions (helical) follow at residues Y218–F238, L280–H300, L312–T332, and F339–P358.

This sequence belongs to the cytochrome b family. In terms of assembly, the cytochrome bc1 complex contains 3 respiratory subunits (MT-CYB, CYC1 and UQCRFS1), 2 core proteins (UQCRC1 and UQCRC2) and probably 6 low-molecular weight proteins. Heme b is required as a cofactor.

The protein resides in the mitochondrion inner membrane. Component of the ubiquinol-cytochrome c reductase complex (complex III or cytochrome b-c1 complex) that is part of the mitochondrial respiratory chain. The b-c1 complex mediates electron transfer from ubiquinol to cytochrome c. Contributes to the generation of a proton gradient across the mitochondrial membrane that is then used for ATP synthesis. The protein is Cytochrome b (MT-CYB) of Python sebae (African rock python).